Reading from the N-terminus, the 390-residue chain is Neuromedin-B receptor (390 aa).

Over 1 to 44 (MPPKSLSNLSQTAGVNQSGFFPGASERDFLPATDRTTAEFVIRC) the chain is Extracellular. N-linked (GlcNAc...) asparagine glycosylation is found at asparagine 8 and asparagine 16. Residues 45 to 65 (VIPSLYLLIITVGLLGNIVLV) form a helical membrane-spanning segment. Residues 66–76 (KIFLTNSAMRS) are Cytoplasmic-facing. Residues 77–97 (VPNIFISNLAAGDVLLLLTCV) traverse the membrane as a helical segment. Residues 98–117 (PVDASRYFLDEWMFGKVGCK) are Extracellular-facing. Cysteine 116 and cysteine 198 are disulfide-bonded. Residues 118–138 (LIPVIQLTSVGVSVFTLTALS) traverse the membrane as a helical segment. Residues 139–155 (ADRYRAIVNPMDIQTSG) lie on the Cytoplasmic side of the membrane. The helical transmembrane segment at 156-176 (AVLWTCVKAGGIWVVSVLLAV) threads the bilayer. The Extracellular portion of the chain corresponds to 177 to 210 (PEAVFSEVARIDGLDNGSFTACIPYPQTDELHPK). Asparagine 192 carries an N-linked (GlcNAc...) asparagine glycan. A helical transmembrane segment spans residues 211 to 231 (IHSVLIFLVYFLIPLGIISVY). Residues 232–266 (YYHIAKTLIKSAHNLPGEYNEHTKKQMETRKRLAK) lie on the Cytoplasmic side of the membrane. The helical transmembrane segment at 267–287 (IVLVFVGCFVFCWFPNHILYM) threads the bilayer. Topologically, residues 288–305 (YRSFNYNEIDPSLGHMIV) are extracellular. A helical membrane pass occupies residues 306 to 328 (TLVARVLSFCNSCVNPFALYLLS). Over 329-390 (ESFRKHFNNQ…GHSVKQEMAL (62 aa)) the chain is Cytoplasmic. The S-palmitoyl cysteine moiety is linked to residue cysteine 341. Serine 352 is modified (phosphoserine).

The protein belongs to the G-protein coupled receptor 1 family. Highly expressed in peripheral tissues where it is detected in the respiratory system, circulatory system, digestive system, urogenital system, lymphatic organs and endocrine system (at protein level). In the testis, expressed mainly in Leydig cells (at protein level).

The protein localises to the cell membrane. Its function is as follows. Receptor for neuromedin-B. Contributes to the maintenance of basal sigh rate through signaling in the pre-Botzinger complex, a cluster of several thousand neurons in the ventrolateral medulla responsible for inspiration during respiratory activity. Contributes to the induction of sneezing following exposure to chemical irritants or allergens which causes release of NMB by nasal sensory neurons and activation of NMBR-expressing neurons in the sneeze-evoking region of the brainstem. These in turn activate neurons of the caudal ventral respiratory group, giving rise to the sneezing response. Contributes to induction of acute itch, possibly through its activation on dorsal root ganglion neurons by the NMB peptide. Plays a role in the innate immune response to influenza A virus infection by enhancing interferon alpha expression and reducing expression of IL6. Plays a role in CSF1-induced proliferation of osteoclast precursors by contributing to the positive regulation of the expression of the CSF1 receptor CSF1R. The chain is Neuromedin-B receptor (NMBR) from Sus scrofa (Pig).